A 154-amino-acid polypeptide reads, in one-letter code: Hemiasterlin resistant protein 1 (154 aa).

2 disordered regions span residues 1 to 64 (MVRR…PGLM) and 86 to 109 (GMFT…PAGA). Low complexity-rich tracts occupy residues 7–28 (ASPS…SSFA), 48–57 (TPMGAPMGAP), and 96–109 (AEQA…PAGA). One can recognise a CHCH domain in the interval 116-154 (SQPCEFEWRQFVDCAQNQSDVSLCNGFNDIFKQCKARYA). 2 consecutive short sequence motifs (cx9C motif) follow at residues 119 to 129 (CEFEWRQFVDC) and 139 to 149 (CNGFNDIFKQC). Intrachain disulfides connect Cys119–Cys149 and Cys129–Cys139.

In Caenorhabditis elegans, this protein is Hemiasterlin resistant protein 1 (har-1).